Reading from the N-terminus, the 532-residue chain is Probable NAD kinase 1 (532 aa).

Over residues 1–26 the composition is skewed to basic and acidic residues; the sequence is MSLDELPHKVSDERVNHDTVTSHESE. The segment at 1–32 is disordered; it reads MSLDELPHKVSDERVNHDTVTSHESEIGSGSI.

This sequence belongs to the NAD kinase family.

The enzyme catalyses NAD(+) + ATP = ADP + NADP(+) + H(+). This chain is Probable NAD kinase 1, found in Oryza sativa subsp. japonica (Rice).